The primary structure comprises 238 residues: MVKLFSYKIKYYLTAFFIIIIQSCASVEHKPLVDGITTAIAPNIIPKIKNGSLFQEKTPINYGYQPLFEDHRSHNIGDTITVVLQENISASNSSSSNLTRDGKANVGVTVTPGTLNPILGLNVNDNKTGIDSIGKNDFSGKGSNSAKNTFTGLITVTVKNVLPNGNLKVIGEKQVAINQGTEFIRFSGVINPNNINKNNLVASTQIADTRIEYVSNNRINDIQKMGWLQRFLLKISPI.

The signal sequence occupies residues 1 to 23; that stretch reads MVKLFSYKIKYYLTAFFIIIIQS. C24 carries the N-palmitoyl cysteine lipid modification. C24 carries the S-diacylglycerol cysteine lipid modification.

Belongs to the FlgH family. In terms of assembly, the basal body constitutes a major portion of the flagellar organelle and consists of four rings (L,P,S, and M) mounted on a central rod.

The protein localises to the cell outer membrane. The protein resides in the bacterial flagellum basal body. Its function is as follows. Assembles around the rod to form the L-ring and probably protects the motor/basal body from shearing forces during rotation. This Buchnera aphidicola subsp. Schizaphis graminum (strain Sg) protein is Flagellar L-ring protein.